Consider the following 170-residue polypeptide: Cyclic pyranopterin monophosphate synthase (170 aa).

Substrate-binding positions include 75-77 (MCH) and 115-116 (ME). The active site involves D130.

The protein belongs to the MoaC family. Homohexamer; trimer of dimers.

It carries out the reaction (8S)-3',8-cyclo-7,8-dihydroguanosine 5'-triphosphate = cyclic pyranopterin phosphate + diphosphate. It functions in the pathway cofactor biosynthesis; molybdopterin biosynthesis. In terms of biological role, catalyzes the conversion of (8S)-3',8-cyclo-7,8-dihydroguanosine 5'-triphosphate to cyclic pyranopterin monophosphate (cPMP). In Bacillus velezensis (strain DSM 23117 / BGSC 10A6 / LMG 26770 / FZB42) (Bacillus amyloliquefaciens subsp. plantarum), this protein is Cyclic pyranopterin monophosphate synthase.